The chain runs to 142 residues: Ribosome-binding factor A (142 aa).

Residues 119–142 (ETLGEVQSESDQPTTDETTTVNKT) form a disordered region. Residues 123-142 (EVQSESDQPTTDETTTVNKT) show a composition bias toward polar residues.

This sequence belongs to the RbfA family. Monomer. Binds 30S ribosomal subunits, but not 50S ribosomal subunits or 70S ribosomes.

The protein localises to the cytoplasm. In terms of biological role, one of several proteins that assist in the late maturation steps of the functional core of the 30S ribosomal subunit. Associates with free 30S ribosomal subunits (but not with 30S subunits that are part of 70S ribosomes or polysomes). Required for efficient processing of 16S rRNA. May interact with the 5'-terminal helix region of 16S rRNA. The protein is Ribosome-binding factor A of Prochlorococcus marinus (strain MIT 9303).